Consider the following 407-residue polypeptide: Argininosuccinate synthase (407 aa).

Residues 16-24 and Ala44 each bind ATP; that span reads AYSGGLDTS. L-citrulline contacts are provided by Tyr96 and Ser101. Gly126 is an ATP binding site. The L-aspartate site is built by Thr128, Asn132, and Asp133. Asn132 contributes to the L-citrulline binding site. Positions 136, 185, 194, 270, and 282 each coordinate L-citrulline.

Belongs to the argininosuccinate synthase family. Type 1 subfamily. In terms of assembly, homotetramer.

The protein localises to the cytoplasm. It catalyses the reaction L-citrulline + L-aspartate + ATP = 2-(N(omega)-L-arginino)succinate + AMP + diphosphate + H(+). Its pathway is amino-acid biosynthesis; L-arginine biosynthesis; L-arginine from L-ornithine and carbamoyl phosphate: step 2/3. In Shewanella oneidensis (strain ATCC 700550 / JCM 31522 / CIP 106686 / LMG 19005 / NCIMB 14063 / MR-1), this protein is Argininosuccinate synthase.